We begin with the raw amino-acid sequence, 809 residues long: Ubiquitin carboxyl-terminal hydrolase 1 (809 aa).

The region spanning 101–738 (AGLVNDGNTC…GVFMLFYEYD (638 aa)) is the USP domain. The active-site Nucleophile is C110. Residues 143 to 195 (NEHNEEGNGQESAQDEATHKKNTRKGGKVYGKHKKKLNRKSSSKEDEEKSQEP) form a disordered region. The segment covering 162–183 (KKNTRKGGKVYGKHKKKLNRKS) has biased composition (basic residues). The span at 184-194 (SSKEDEEKSQE) shows a compositional bias: basic and acidic residues. Phosphoserine is present on residues S530, S531, and S555. Positions 569 to 596 (ASHYNHTKDISNYDPLNGEVDGVTSDDE) are disordered. Phosphoserine is present on residues S618 and S638. A Phosphothreonine modification is found at T652. A phosphoserine mark is found at S653, S654, and S670. H697 serves as the catalytic Proton acceptor. A disordered region spans residues 750 to 809 (LEAIQSNNEEDDEKEQEQKGVQEPKESQEQGEGEEQEEGQEQMKFERTEDHRDISGKDVN). S755 is modified (phosphoserine). Residues 765 to 777 (QEQKGVQEPKESQ) show a composition bias toward basic and acidic residues. Positions 778–789 (EQGEGEEQEEGQ) are enriched in acidic residues. A compositionally biased stretch (basic and acidic residues) spans 790 to 809 (EQMKFERTEDHRDISGKDVN).

Belongs to the peptidase C19 family.

The catalysed reaction is Thiol-dependent hydrolysis of ester, thioester, amide, peptide and isopeptide bonds formed by the C-terminal Gly of ubiquitin (a 76-residue protein attached to proteins as an intracellular targeting signal).. Its function is as follows. Has an ATP-independent isopeptidase activity, cleaving at the C-terminus of the ubiquitin moiety in natural or engineered linear fusion proteins, irrespective of their size or the presence of an N-terminal extension to ubiquitin. This is Ubiquitin carboxyl-terminal hydrolase 1 (UBP1) from Saccharomyces cerevisiae (strain ATCC 204508 / S288c) (Baker's yeast).